The chain runs to 488 residues: Germacrene A acid 8-beta-hydroxylase (488 aa).

Residues 2–22 (ELFTIFSIVVSSLILFTFWSL) form a helical; Signal-anchor for type II membrane protein membrane-spanning segment. A glycan (N-linked (GlcNAc...) asparagine) is linked at Asn407. Cys429 is a heme binding site.

The protein belongs to the cytochrome P450 family. The cofactor is heme. As to expression, expressed in leaf primordia.

Its subcellular location is the membrane. It carries out the reaction germacra-1(10),4,11(13)-trien-12-oate + reduced [NADPH--hemoprotein reductase] + O2 = 8beta-hydroxygermacra-1(10),4,11(13)-trien-12-oate + oxidized [NADPH--hemoprotein reductase] + H2O + H(+). It functions in the pathway secondary metabolite biosynthesis; terpenoid biosynthesis. Its function is as follows. Involved in the biosynthesis of germacrene-derived sesquiterpene lactones. Hydroxylates germacrene A acid to 8-beta-hydroxy-germacrene A acid. Unlike 6-alpha-hydroxy-germacrene A acid, this compound cannot undergo spontaneous lactonization. This Helianthus annuus (Common sunflower) protein is Germacrene A acid 8-beta-hydroxylase.